The following is a 115-amino-acid chain: Hydrogenase maturation factor HypA (115 aa).

Histidine 2 contacts Ni(2+). Positions 73, 76, 89, and 92 each coordinate Zn(2+).

Belongs to the HypA/HybF family.

Functionally, involved in the maturation of [NiFe] hydrogenases. Required for nickel insertion into the metal center of the hydrogenase. The protein is Hydrogenase maturation factor HypA of Aquifex aeolicus (strain VF5).